The primary structure comprises 630 residues: DNA mismatch repair protein MutL (630 aa).

Disordered stretches follow at residues 361 to 386 and 407 to 431; these read VLSSDIGGGEDATAPLAPLTGDAPAE and FERKQEEEVGEERCSPRLPTDGQAE. The segment covering 407-421 has biased composition (basic and acidic residues); sequence FERKQEEEVGEERCS.

The protein belongs to the DNA mismatch repair MutL/HexB family.

Functionally, this protein is involved in the repair of mismatches in DNA. It is required for dam-dependent methyl-directed DNA mismatch repair. May act as a 'molecular matchmaker', a protein that promotes the formation of a stable complex between two or more DNA-binding proteins in an ATP-dependent manner without itself being part of a final effector complex. This chain is DNA mismatch repair protein MutL, found in Geobacillus kaustophilus (strain HTA426).